Consider the following 691-residue polypeptide: MSRTTPLKRVRNIGIAAHIDAGKTTTSERILFFTGMSHKIGEVHDGAATMDWMEQEKERGITITSAATTCFWKNHQINLIDTPGHVDFTIEVERSMRVLDGAVAVFCSVGGVQPQSETVWRQANKYGVPRIVFVNKMDRIGANFFNVEEQIKNRLKGNPVPLQIPIGAEDNFKGVIDLITMKALVWEDESKPTDYVEKEIPAELKEKAEEYRVKMIEAVSETSDELMEKYLGGEELTQDEIKAGIKAGCLSLSMVPMLCGTAFKNKGVQPLLDAVVAYLPAPDEVANIKGEYEDGTEVSVKSTDDGEFAALAFKIMTDPFVGQLTFVRVYRGSLESGSYAYNSTKDKKERIGRLLKMHSNKREEIKTLYAGEIGAVVGLKDTLTGDTLASEKDKVILERMDFPDPVISVAVEPKTKADQEKMSIALNKLAQEDPSFRVSTDEESGQTIISGMGELHLEIIVDRMLREFKVEAEVGQPQVAYRETIRKTVEQEYKYAKQSGGRGQYGHVFLRLEPLEPGSGYEFVNDIKGGVIPKEYIPAVDKGVQEALQNGVLAGYPVEDVKVTVYDGSYHEVDSSEMAFKLAASMGFKEGARKAGAVILEPMMKVEVETPEEYMGDVIGDLNKRRGQVNSMDERGGNKIITAFCPLAEMFGYSTDLRSQTQGRATYSMEFDHYDEVPKNVSEEIIKKRNG.

Residues 8–283 (KRVRNIGIAA…AVVAYLPAPD (276 aa)) enclose the tr-type G domain. GTP contacts are provided by residues 17–24 (AHIDAGKT), 81–85 (DTPGH), and 135–138 (NKMD).

Belongs to the TRAFAC class translation factor GTPase superfamily. Classic translation factor GTPase family. EF-G/EF-2 subfamily.

Its subcellular location is the cytoplasm. Catalyzes the GTP-dependent ribosomal translocation step during translation elongation. During this step, the ribosome changes from the pre-translocational (PRE) to the post-translocational (POST) state as the newly formed A-site-bound peptidyl-tRNA and P-site-bound deacylated tRNA move to the P and E sites, respectively. Catalyzes the coordinated movement of the two tRNA molecules, the mRNA and conformational changes in the ribosome. The polypeptide is Elongation factor G (Campylobacter lari (strain RM2100 / D67 / ATCC BAA-1060)).